A 350-amino-acid polypeptide reads, in one-letter code: Probable galactose-1-phosphate uridylyltransferase (350 aa).

Residues 31 to 52 (PWSGQQEKAQKNELPEFDPTNP) are disordered. Residue cysteine 54 coordinates Zn(2+). UDP-alpha-D-glucose is bound by residues 76–77 (ND) and asparagine 152. Zn(2+) is bound at residue histidine 163. The active-site Tele-UMP-histidine intermediate is the histidine 165. UDP-alpha-D-glucose contacts are provided by residues glutamine 167, 314–317 (KFMV), and 319–320 (FE).

It belongs to the galactose-1-phosphate uridylyltransferase type 1 family. In terms of assembly, homodimer. The cofactor is Zn(2+).

The enzyme catalyses alpha-D-galactose 1-phosphate + UDP-alpha-D-glucose = alpha-D-glucose 1-phosphate + UDP-alpha-D-galactose. The protein operates within carbohydrate metabolism; galactose metabolism. The chain is Probable galactose-1-phosphate uridylyltransferase (Galt) from Drosophila melanogaster (Fruit fly).